The sequence spans 208 residues: Peptidyl-prolyl cis-trans isomerase FKBP13, chloroplastic (208 aa).

2 disulfide bridges follow: Cys84–Cys96 and Cys185–Cys190. Residues 109–208 (GQLIKAHYVG…LFDIEYIGKA (100 aa)) form the PPIase FKBP-type domain.

Belongs to the FKBP-type PPIase family. Interacts in vitro with LTO1. The precursor, but not the mature form of the protein, interacts with the Rieske protein. Expressed in stems, leaves and developing flower buds, but not in roots.

Its subcellular location is the plastid. It localises to the chloroplast thylakoid lumen. The catalysed reaction is [protein]-peptidylproline (omega=180) = [protein]-peptidylproline (omega=0). PPIase activity is optimal in oxidized form (S-S) and minimal in reduced form (SH). Reduction of the oxidized form is mediated by thioredoxin (TRX-M). Its function is as follows. PPIases accelerate the folding of proteins. It catalyzes the cis-trans isomerization of proline imidic peptide bonds in oligopeptides. Responsive of the major PPIase activity in the chloroplast thylakoid lumen. Regulates the accumulation of Rieske protein, an essential component of the photosynthetic electron transport chain. This is Peptidyl-prolyl cis-trans isomerase FKBP13, chloroplastic from Arabidopsis thaliana (Mouse-ear cress).